Consider the following 229-residue polypeptide: Prolactin (229 aa).

The first 30 residues, 1 to 30 (MDKKRSSLKGSLLLLLLLVSDLLLCKSVAS), serve as a signal peptide directing secretion. A disulfide bond links C34 and C41. The residue at position 56 (S56) is a Phosphoserine. An N-linked (GlcNAc...) asparagine; partial glycan is attached at N61. 2 positions are modified to phosphoserine: S64 and S120. 2 cysteine pairs are disulfide-bonded: C88/C204 and C221/C229.

It belongs to the somatotropin/prolactin family. In terms of assembly, interacts with PRLR.

The protein resides in the secreted. In terms of biological role, prolactin acts primarily on the mammary gland by promoting lactation. The chain is Prolactin (PRL) from Equus caballus (Horse).